Consider the following 124-residue polypeptide: Holo-[acyl-carrier-protein] synthase (124 aa).

Mg(2+)-binding residues include D8 and E58.

This sequence belongs to the P-Pant transferase superfamily. AcpS family. Mg(2+) serves as cofactor.

The protein resides in the cytoplasm. It catalyses the reaction apo-[ACP] + CoA = holo-[ACP] + adenosine 3',5'-bisphosphate + H(+). Its function is as follows. Transfers the 4'-phosphopantetheine moiety from coenzyme A to a Ser of acyl-carrier-protein. This chain is Holo-[acyl-carrier-protein] synthase, found in Lacticaseibacillus casei (strain BL23) (Lactobacillus casei).